The following is a 798-amino-acid chain: MQQHPDQLKLEEEPYLKGTVNTVIYHNDTNLYTVLKVKVTETSEAIEDKAVSVTGYFPALQEEETYTFYGKIVTHPKFGLQFQAEHFKKEIPTTKEGIIQYLSSDLFEGIGKKTAEEIVKKLGDSAINKILADASVLYDVPRLSKKKADTLAGALQRHQGLEQIMISLNQFGFGPQLSMKIYQAYESETLEKIQENPYQLVKDVEGIGFGKADELGSRMGLSGNHPERVKAAILYTLETTCLSEGHTYIETEQLIIDTQSLLNQSAREGQRITEMDAANAIIALGENKDIVIEDGRCYFPSLFYAEQNVAKRVKHIASQTEYENQFPESEFLLALGELEERMDVQYAPSQKEAIQKALSSPMLLLTGGPGTGKTTVIRGIVELYGELHGVSLDPSAYKKDEAFPIVLAAPTGRAAKRMSESTGLPAVTIHRLLGWNGAEGFTHTEDQPIEGKLLIIDEASMLDIWLANHLFKAIPDHIQIIIVGDEDQLPSVGPGQVLRDLLASQVIPTVRLTDIYRQAEGSSIVELAHQMKNGLLPNNLTAPTKDRSFIRCGGSQIKEVVEKVVANALKKGYTAKDIQVLAPMYRGKAGINELNVMLQDILNPPKEKRRELKFGDVVYRTGDKILQLVNQPENNVFNGDIGEITSIFYAKENTEKEDMAVVSFDGNEMTFTKKDFNQFTHAYCCSIHKSQGSEFPIVVLPVVKGYYRMLRRNLLYTAITRAKKFLILCGEEEALEWGVKNNDATVRQTSLKNRLSVQVEEMDAELEALQKELPFSVHDANIGMEGITPFDFMKEEQQ.

An ATP-binding site is contributed by 370-374 (GTGKT).

It belongs to the RecD family. RecD2 subfamily. As to quaternary structure, interacts with SSB (sbbA).

Its subcellular location is the cytoplasm. It localises to the nucleoid. The enzyme catalyses Couples ATP hydrolysis with the unwinding of duplex DNA at the replication fork by translocating in the 5'-3' direction. This creates two antiparallel DNA single strands (ssDNA). The leading ssDNA polymer is the template for DNA polymerase III holoenzyme which synthesizes a continuous strand.. The catalysed reaction is ATP + H2O = ADP + phosphate + H(+). Its function is as follows. In vivo may favor replication restart by preventing RecA from binding to blocked replication forks, avoiding unnecessary recombination during replication restart. Acts as a negative modulator of the RecA-ssDNA filament, may dissasemble RecA threads, can act as both a positive and negative regulator of strand exchange. Probably stabilizes or aids normal replication fork progression, is important for survival after treatment with DNA-damaging agents that can result in replication fork stress. Overcomes the inhibition of replication restart by RecA/RecO, probably by displacing RecA. Increasing levels inhibit PriA-dependent DNA replication initiation (but have little effect on ongoing replication) in vitro; may act by disturbing SsbA assembly. Probably has a role in recombinational DNA repair. Does not seem to contribute to mismatch repair. Has 5'-3' helicase activity that is probably ATP-dependent. The sequence is that of ATP-dependent RecD2 DNA helicase from Bacillus subtilis (strain 168).